A 369-amino-acid chain; its full sequence is MADGVRAVVADDSHFMRSVISDILSDGGIDVVAQARDGEEAVSAVIEHRPDVVTMDVEMPVMNGIEATERIMAESPTPVLMLSAHTDENADVTFEALDKGAVDFFTKPGGEVSMEMSRLKDQLVEMVSSVAAVDVGATGSRSGTGSDSGTAPTTAGGSATDRRGTGGSSGQTTYVANPTLVIGSSTGGPKMVEQVMENLPIEADLRVLIIQHMPEGFTGRFAERINTRSDYEVQEATDGARIGGGEGLVAAGDRHMEVKNYRNGRLRTKLTQDEPVNSVRPAVDVTMQTAAETIDDPLVGLILTGMGEDGADGIRRIKQAGGKTIAQDEATSAVYGMPKRAAETGCVDTVLPIDDIADGVIDTITTEVT.

Positions 6 to 122 (RAVVADDSHF…SMEMSRLKDQ (117 aa)) constitute a Response regulatory domain. Position 56 is a 4-aspartylphosphate (Asp-56). A disordered region spans residues 136 to 178 (GATGSRSGTGSDSGTAPTTAGGSATDRRGTGGSSGQTTYVANP). The segment covering 138-159 (TGSRSGTGSDSGTAPTTAGGSA) has biased composition (low complexity). A CheB-type methylesterase domain is found at 173–367 (TYVANPTLVI…DGVIDTITTE (195 aa)). Catalysis depends on residues Ser-185, His-212, and Asp-309.

It belongs to the CheB family. In terms of processing, phosphorylated by CheA. Phosphorylation of the N-terminal regulatory domain activates the methylesterase activity.

Its subcellular location is the cytoplasm. The catalysed reaction is [protein]-L-glutamate 5-O-methyl ester + H2O = L-glutamyl-[protein] + methanol + H(+). The enzyme catalyses L-glutaminyl-[protein] + H2O = L-glutamyl-[protein] + NH4(+). In terms of biological role, involved in chemotaxis. Part of a chemotaxis signal transduction system that modulates chemotaxis in response to various stimuli. Catalyzes the demethylation of specific methylglutamate residues introduced into the chemoreceptors (methyl-accepting chemotaxis proteins or MCP) by CheR. Also mediates the irreversible deamidation of specific glutamine residues to glutamic acid. This Haloarcula marismortui (strain ATCC 43049 / DSM 3752 / JCM 8966 / VKM B-1809) (Halobacterium marismortui) protein is Protein-glutamate methylesterase/protein-glutamine glutaminase.